Consider the following 478-residue polypeptide: Glutamine synthetase (478 aa).

In terms of domain architecture, GS beta-grasp spans 16–100; the sequence is EKVEYVDVRF…INFFVHDPFT (85 aa). The region spanning 108-478 is the GS catalytic domain; that stretch reads PRNIARKAEN…PYEFALYYDV (371 aa). Residues E133 and E135 each contribute to the Mg(2+) site. ATP is bound at residue E214. Residues E219 and E227 each coordinate Mg(2+). 230 to 232 provides a ligand contact to ATP; it reads YQF. L-glutamate contacts are provided by residues 271–272 and G272; that span reads NG. Residue H276 coordinates Mg(2+). ATP contacts are provided by residues 278 to 280 and S280; that span reads HQS. Positions 329, 335, and 347 each coordinate L-glutamate. ATP-binding residues include R347, R352, and K361. E366 contributes to the Mg(2+) binding site. R368 provides a ligand contact to L-glutamate. Y406 carries the post-translational modification O-AMP-tyrosine.

The protein belongs to the glutamine synthetase family. Oligomer of 12 subunits arranged in the form of two hexagons. The cofactor is Mg(2+).

The protein localises to the cytoplasm. It catalyses the reaction L-glutamate + NH4(+) + ATP = L-glutamine + ADP + phosphate + H(+). With respect to regulation, when cellular nitrogen levels are high, the C-terminal adenylyl transferase (AT) of GlnE inhibits GlnA by covalent transfer of an adenylyl group from ATP to Tyr-406. Conversely, when nitrogen levels are low, the N-terminal adenylyl removase (AR) of GlnE activates GlnA by removing the adenylyl group by phosphorolysis. The fully adenylated enzyme complex is inactive. Its function is as follows. Involved in nitrogen metabolism via ammonium assimilation. Catalyzes the ATP-dependent biosynthesis of glutamine from glutamate and ammonia. Also plays a key role in controlling the ammonia levels within infected host cells and so contributes to the pathogens capacity to inhibit phagosome acidification and phagosome-lysosome fusion. Involved in cell wall biosynthesis via the production of the major component poly-L-glutamine (PLG). PLG synthesis in the cell wall occurs only in nitrogen limiting conditions and on the contrary high nitrogen conditions inhibit PLG synthesis. This is Glutamine synthetase from Mycobacterium bovis (strain ATCC BAA-935 / AF2122/97).